The following is a 363-amino-acid chain: Putative RAD2-like endonuclease 095R (363 aa).

Belongs to the XPG/RAD2 endonuclease family. Mg(2+) is required as a cofactor.

Its subcellular location is the host nucleus. Probable endonuclease. The sequence is that of Putative RAD2-like endonuclease 095R from Frog virus 3 (isolate Goorha) (FV-3).